The primary structure comprises 317 residues: Probable RuBisCO transcriptional regulator (317 aa).

An HTH lysR-type domain is found at F6 to T63. Residues F23–H42 constitute a DNA-binding region (H-T-H motif).

This sequence belongs to the LysR transcriptional regulatory family.

The protein localises to the plastid. The protein resides in the chloroplast. In terms of biological role, trans-acting transcriptional regulator of RuBisCO genes (rbcL and rbcS) expression. The sequence is that of Probable RuBisCO transcriptional regulator (rbcR) from Cyanidium caldarium (Red alga).